A 342-amino-acid polypeptide reads, in one-letter code: 4-hydroxy-2-oxovalerate aldolase (342 aa).

The region spanning 7 to 259 (ILVHDMSLRD…CTGVDLGRIQ (253 aa)) is the Pyruvate carboxyltransferase domain. Residue 15-16 (RD) coordinates substrate. Asp-16 is a Mn(2+) binding site. His-19 functions as the Proton acceptor in the catalytic mechanism. Substrate is bound by residues Ser-169 and His-198. The Mn(2+) site is built by His-198 and His-200. Tyr-289 is a binding site for substrate.

Belongs to the 4-hydroxy-2-oxovalerate aldolase family.

It catalyses the reaction (S)-4-hydroxy-2-oxopentanoate = acetaldehyde + pyruvate. This Alkalilimnicola ehrlichii (strain ATCC BAA-1101 / DSM 17681 / MLHE-1) protein is 4-hydroxy-2-oxovalerate aldolase.